Reading from the N-terminus, the 351-residue chain is UDP-N-acetylglucosamine--N-acetylmuramyl-(pentapeptide) pyrophosphoryl-undecaprenol N-acetylglucosamine transferase (351 aa).

UDP-N-acetyl-alpha-D-glucosamine is bound by residues 11–13 (TGG), Asn-120, Arg-161, Ser-187, and Gln-281.

The protein belongs to the glycosyltransferase 28 family. MurG subfamily.

It localises to the cell inner membrane. The catalysed reaction is di-trans,octa-cis-undecaprenyl diphospho-N-acetyl-alpha-D-muramoyl-L-alanyl-D-glutamyl-meso-2,6-diaminopimeloyl-D-alanyl-D-alanine + UDP-N-acetyl-alpha-D-glucosamine = di-trans,octa-cis-undecaprenyl diphospho-[N-acetyl-alpha-D-glucosaminyl-(1-&gt;4)]-N-acetyl-alpha-D-muramoyl-L-alanyl-D-glutamyl-meso-2,6-diaminopimeloyl-D-alanyl-D-alanine + UDP + H(+). The protein operates within cell wall biogenesis; peptidoglycan biosynthesis. Cell wall formation. Catalyzes the transfer of a GlcNAc subunit on undecaprenyl-pyrophosphoryl-MurNAc-pentapeptide (lipid intermediate I) to form undecaprenyl-pyrophosphoryl-MurNAc-(pentapeptide)GlcNAc (lipid intermediate II). The chain is UDP-N-acetylglucosamine--N-acetylmuramyl-(pentapeptide) pyrophosphoryl-undecaprenol N-acetylglucosamine transferase from Rippkaea orientalis (strain PCC 8801 / RF-1) (Cyanothece sp. (strain PCC 8801)).